The primary structure comprises 463 residues: Phosphoglycerate transporter protein (463 aa).

The Cytoplasmic segment spans residues 1–29 (MLTILKTGQSAHKVPPEKVQATYGRYRIQ). 12 consecutive transmembrane segments (helical) span residues 30-50 (ALLS…NFTL), 59-79 (LDLS…AYGI), 106-126 (IVNV…LVVF), 127-147 (NGLF…NWFP), 160-180 (ISHN…FAIL), 188-208 (ASYI…LVLG), 267-287 (VFVY…LLTV), 297-317 (VAFL…GWLS), 326-346 (MPLA…YWKS), 349-369 (LLMV…PQFL), 391-411 (GFMS…VMVD), and 413-433 (LGWY…ILFC).

The protein belongs to the major facilitator superfamily. Organophosphate:Pi antiporter (OPA) (TC 2.A.1.4) family.

It localises to the cell inner membrane. Functionally, the phosphoglycerate transporter protein is a part of the PGT transport system. It is the membrane bound transporter for phosphoglycerate into salmonella. This chain is Phosphoglycerate transporter protein (pgtP), found in Salmonella typhimurium (strain LT2 / SGSC1412 / ATCC 700720).